A 149-amino-acid chain; its full sequence is Calmodulin (149 aa).

N-acetylalanine is present on alanine 2. 4 EF-hand domains span residues 8-43 (EQIA…LGQN), 44-79 (PTEA…KMKD), 81-116 (DTEE…LGEK), and 117-149 (LTDE…MMAK). 14 residues coordinate Ca(2+): aspartate 21, aspartate 23, aspartate 25, threonine 27, glutamate 32, aspartate 57, aspartate 59, asparagine 61, threonine 63, glutamate 68, aspartate 94, aspartate 96, asparagine 98, and glutamate 105. Lysine 116 bears the N6,N6,N6-trimethyllysine mark. Ca(2+) is bound by residues aspartate 130, aspartate 132, aspartate 134, histidine 136, and glutamate 141.

Belongs to the calmodulin family.

In terms of biological role, calmodulin mediates the control of a large number of enzymes, ion channels and other proteins by Ca(2+). Among the enzymes to be stimulated by the calmodulin-Ca(2+) complex are a number of protein kinases and phosphatases. This chain is Calmodulin, found in Tetrahymena pyriformis.